The following is a 395-amino-acid chain: Elongation factor Tu (395 aa).

The tr-type G domain maps to 10–204 (KPHVNVGTIG…AVDNWVPLPE (195 aa)). Positions 19–26 (GHVDHGKT) are G1. A GTP-binding site is contributed by 19 to 26 (GHVDHGKT). Thr26 lines the Mg(2+) pocket. The interval 60–64 (GITIN) is G2. Positions 81 to 84 (DCPG) are G3. GTP is bound by residues 81–85 (DCPGH) and 136–139 (NKCD). Residues 136–139 (NKCD) are G4. Residues 174–176 (SAL) are G5.

It belongs to the TRAFAC class translation factor GTPase superfamily. Classic translation factor GTPase family. EF-Tu/EF-1A subfamily. Monomer.

The protein localises to the cytoplasm. The catalysed reaction is GTP + H2O = GDP + phosphate + H(+). In terms of biological role, GTP hydrolase that promotes the GTP-dependent binding of aminoacyl-tRNA to the A-site of ribosomes during protein biosynthesis. The chain is Elongation factor Tu from Porphyromonas gingivalis (strain ATCC 33277 / DSM 20709 / CIP 103683 / JCM 12257 / NCTC 11834 / 2561).